Here is a 302-residue protein sequence, read N- to C-terminus: MFFRNLTLFRFPTSLDFSQIDSILPNARLRPVGPLEMTSRGFISPFGREEQEVLNQRQGDFLWLTVGSEDKILPASVVNDLLTRKCSEIEEKKGHPPGGRERKRIKDDLIHELLPRAFVKKSRIDAMLDLRYGYVAVDTASRKAAETVISEIRDLLGSFPALPLNAEISIRSMLTSWIAGEPLPEHLNLGDECEMKDATEGGAIIKCQHQALRCEEIDKHLEVGKQVSKLALILDDHVSFVLGDDLVIRKLKFLDGMLDQLEHSDTDGIRAELDARFALMSAEIRRLFLLLEVPLKLSKANN.

Belongs to the RdgC family.

Its subcellular location is the cytoplasm. It localises to the nucleoid. In terms of biological role, may be involved in recombination. This chain is Recombination-associated protein RdgC, found in Xylella fastidiosa (strain 9a5c).